The primary structure comprises 418 residues: Pyruvate decarboxylase 1 (418 aa).

His-59 contacts substrate. A thiamine pyrophosphate binding region spans residues 337 to 418; it reads DSWFNCQKLK…IFLINNGGYT (82 aa). Residues Asp-387, Asn-414, and Gly-416 each coordinate Mg(2+).

It belongs to the TPP enzyme family. As to quaternary structure, homotetramer. A metal cation is required as a cofactor. Thiamine diphosphate serves as cofactor. As to expression, leaves.

It catalyses the reaction a 2-oxocarboxylate + H(+) = an aldehyde + CO2. This Nicotiana tabacum (Common tobacco) protein is Pyruvate decarboxylase 1 (PDC1).